Here is a 262-residue protein sequence, read N- to C-terminus: 5'-nucleotidase SurE (262 aa).

A divalent metal cation is bound by residues Asp9, Asp10, Ser40, and Asn95.

It belongs to the SurE nucleotidase family. A divalent metal cation is required as a cofactor.

The protein resides in the cytoplasm. It catalyses the reaction a ribonucleoside 5'-phosphate + H2O = a ribonucleoside + phosphate. Nucleotidase that shows phosphatase activity on nucleoside 5'-monophosphates. The chain is 5'-nucleotidase SurE from Aliarcobacter butzleri (strain RM4018) (Arcobacter butzleri).